Reading from the N-terminus, the 248-residue chain is Anamorsin homolog (248 aa).

An N-terminal SAM-like domain region spans residues Phe-4 to Phe-129. The linker stretch occupies residues Ala-130–Lys-161. Cys-172, Cys-181, Cys-184, and Cys-186 together coordinate [2Fe-2S] cluster. A fe-S binding site A region spans residues Cys-172–Cys-186. Residues Cys-209, Cys-212, Cys-220, and Cys-223 each contribute to the [4Fe-4S] cluster site. Short sequence motifs (cx2C motif) lie at residues Cys-209–Cys-212 and Cys-220–Cys-223. The tract at residues Cys-209–Cys-223 is fe-S binding site B.

It belongs to the anamorsin family. Monomer. [2Fe-2S] cluster is required as a cofactor. Requires [4Fe-4S] cluster as cofactor.

The protein resides in the cytoplasm. The protein localises to the mitochondrion intermembrane space. Functionally, component of the cytosolic iron-sulfur (Fe-S) protein assembly (CIA) machinery. Required for the maturation of extramitochondrial Fe-S proteins. Part of an electron transfer chain functioning in an early step of cytosolic Fe-S biogenesis, facilitating the de novo assembly of a [4Fe-4S] cluster on the cytosolic Fe-S scaffold complex. Electrons are transferred from NADPH via a FAD- and FMN-containing diflavin oxidoreductase. Together with the diflavin oxidoreductase, also required for the assembly of the diferric tyrosyl radical cofactor of ribonucleotide reductase (RNR), probably by providing electrons for reduction during radical cofactor maturation in the catalytic small subunit. The chain is Anamorsin homolog from Drosophila melanogaster (Fruit fly).